The sequence spans 228 residues: Rab-like protein 2B (228 aa).

GTP-binding positions include glycine 28–serine 35, aspartate 76–glutamine 80, and asparagine 133–aspartate 136. The disordered stretch occupies residues leucine 200 to serine 228.

The protein belongs to the small GTPase superfamily. Rab family. Interacts (in its GTP-bound form) with CEP19 (via residues 121-150); this interaction is required for its localization to the mother centriole and cilium basal body. Interacts (in its GTP-bound form) with the intraflagellar transport (IFT) complex B (via the IFT74-IFT81 heterodimer). Binding to CEP19 and the IFT74-IFT81 heterodimer is mutually exclusive. In terms of tissue distribution, expressed in the testis.

The protein resides in the cytoplasm. It is found in the cytoskeleton. It localises to the microtubule organizing center. The protein localises to the centrosome. Its subcellular location is the centriole. The protein resides in the cilium basal body. Its function is as follows. Small GTPase required for ciliation. Activated in a guanine nucleotide exchange factor (GEF)-independent manner via its intrinsic GDP for GTP nucleotide exchange ability. Involved in ciliary assembly by binding the intraflagellar transport (IFT) complex B from the large pool pre-docked at the base of the cilium and thus triggers its entry into the cilia. The chain is Rab-like protein 2B (RABL2B) from Homo sapiens (Human).